The primary structure comprises 143 residues: Large ribosomal subunit protein uL11 (143 aa).

This sequence belongs to the universal ribosomal protein uL11 family. Part of the ribosomal stalk of the 50S ribosomal subunit. Interacts with L10 and the large rRNA to form the base of the stalk. L10 forms an elongated spine to which L12 dimers bind in a sequential fashion forming a multimeric L10(L12)X complex. Post-translationally, one or more lysine residues are methylated.

Its function is as follows. Forms part of the ribosomal stalk which helps the ribosome interact with GTP-bound translation factors. The chain is Large ribosomal subunit protein uL11 from Leifsonia xyli subsp. xyli (strain CTCB07).